A 505-amino-acid chain; its full sequence is Cobyric acid synthase (505 aa).

A GATase cobBQ-type domain is found at 260 to 453 (RIAVAAIYFP…FHGIIDEPEV (194 aa)). The active-site Nucleophile is Cys341. His445 is an active-site residue.

This sequence belongs to the CobB/CobQ family. CobQ subfamily.

Its pathway is cofactor biosynthesis; adenosylcobalamin biosynthesis. In terms of biological role, catalyzes amidations at positions B, D, E, and G on adenosylcobyrinic A,C-diamide. NH(2) groups are provided by glutamine, and one molecule of ATP is hydrogenolyzed for each amidation. The chain is Cobyric acid synthase from Chlorobium phaeobacteroides (strain DSM 266 / SMG 266 / 2430).